A 147-amino-acid polypeptide reads, in one-letter code: Large ribosomal subunit protein uL16 (147 aa).

It belongs to the universal ribosomal protein uL16 family. In terms of assembly, part of the 50S ribosomal subunit.

Functionally, binds 23S rRNA and is also seen to make contacts with the A and possibly P site tRNAs. The polypeptide is Large ribosomal subunit protein uL16 (Clostridium tetani (strain Massachusetts / E88)).